The chain runs to 262 residues: Adenosylcobinamide-GDP ribazoletransferase (262 aa).

Helical transmembrane passes span 11–31 (LNLF…SWVI), 43–63 (YFGL…WFTQ), 66–86 (LPTS…TGGF), 121–141 (AIVL…LALF), 146–166 (AITG…SLIF), and 199–219 (IFVL…SLWA).

The protein belongs to the CobS family. The cofactor is Mg(2+).

The protein localises to the cell inner membrane. The catalysed reaction is alpha-ribazole + adenosylcob(III)inamide-GDP = adenosylcob(III)alamin + GMP + H(+). It carries out the reaction alpha-ribazole 5'-phosphate + adenosylcob(III)inamide-GDP = adenosylcob(III)alamin 5'-phosphate + GMP + H(+). It participates in cofactor biosynthesis; adenosylcobalamin biosynthesis; adenosylcobalamin from cob(II)yrinate a,c-diamide: step 7/7. Functionally, joins adenosylcobinamide-GDP and alpha-ribazole to generate adenosylcobalamin (Ado-cobalamin). Also synthesizes adenosylcobalamin 5'-phosphate from adenosylcobinamide-GDP and alpha-ribazole 5'-phosphate. The sequence is that of Adenosylcobinamide-GDP ribazoletransferase from Shewanella denitrificans (strain OS217 / ATCC BAA-1090 / DSM 15013).